Here is a 378-residue protein sequence, read N- to C-terminus: Chaperone protein DnaJ (378 aa).

The J domain maps to 5–69 (DYYEVLGVSK…NKRANYDQFG (65 aa)). The CR-type zinc finger occupies 135 to 217 (GSEKEISIRK…CHGKGTENKN (83 aa)). Positions 148, 151, 165, 168, 191, 194, 205, and 208 each coordinate Zn(2+). 4 CXXCXGXG motif repeats span residues 148-155 (CHTCDGEG), 165-172 (CHYCNGSG), 191-198 (CPVCSGSG), and 205-212 (CPTCHGKG).

The protein belongs to the DnaJ family. Homodimer. It depends on Zn(2+) as a cofactor.

Its subcellular location is the cytoplasm. Its function is as follows. Participates actively in the response to hyperosmotic and heat shock by preventing the aggregation of stress-denatured proteins and by disaggregating proteins, also in an autonomous, DnaK-independent fashion. Unfolded proteins bind initially to DnaJ; upon interaction with the DnaJ-bound protein, DnaK hydrolyzes its bound ATP, resulting in the formation of a stable complex. GrpE releases ADP from DnaK; ATP binding to DnaK triggers the release of the substrate protein, thus completing the reaction cycle. Several rounds of ATP-dependent interactions between DnaJ, DnaK and GrpE are required for fully efficient folding. Also involved, together with DnaK and GrpE, in the DNA replication of plasmids through activation of initiation proteins. The polypeptide is Chaperone protein DnaJ (Staphylococcus saprophyticus subsp. saprophyticus (strain ATCC 15305 / DSM 20229 / NCIMB 8711 / NCTC 7292 / S-41)).